Reading from the N-terminus, the 152-residue chain is Transcriptional regulator MraZ (152 aa).

2 consecutive SpoVT-AbrB domains span residues 5–52 (ANAI…PLNE) and 81–124 (ATES…DEDM).

Belongs to the MraZ family. Forms oligomers.

It is found in the cytoplasm. The protein localises to the nucleoid. In Psychromonas ingrahamii (strain DSM 17664 / CCUG 51855 / 37), this protein is Transcriptional regulator MraZ.